The chain runs to 103 residues: MLELLPLLFGYLIMFFGALGVVRFPDVYTRLHAATKCDTGGIMGIILGLSMIVNSWAIRTKLVILLIFIAMINPMISHAIARGAYKGGVKPKVKVDMYAWDNP.

The protein belongs to the UPF0091 family.

The polypeptide is UPF0091 protein PH0944 (Pyrococcus horikoshii (strain ATCC 700860 / DSM 12428 / JCM 9974 / NBRC 100139 / OT-3)).